The following is a 431-amino-acid chain: 3-phosphoshikimate 1-carboxyvinyltransferase (431 aa).

Lysine 22, serine 23, and arginine 27 together coordinate 3-phosphoshikimate. Lysine 22 provides a ligand contact to phosphoenolpyruvate. Positions 94 and 122 each coordinate phosphoenolpyruvate. 3-phosphoshikimate-binding residues include serine 168, serine 169, glutamine 170, serine 196, aspartate 315, and lysine 342. Residue glutamine 170 participates in phosphoenolpyruvate binding. The active-site Proton acceptor is the aspartate 315. Residues arginine 346, arginine 390, and lysine 414 each coordinate phosphoenolpyruvate.

The protein belongs to the EPSP synthase family. As to quaternary structure, monomer.

It is found in the cytoplasm. The catalysed reaction is 3-phosphoshikimate + phosphoenolpyruvate = 5-O-(1-carboxyvinyl)-3-phosphoshikimate + phosphate. It participates in metabolic intermediate biosynthesis; chorismate biosynthesis; chorismate from D-erythrose 4-phosphate and phosphoenolpyruvate: step 6/7. Its function is as follows. Catalyzes the transfer of the enolpyruvyl moiety of phosphoenolpyruvate (PEP) to the 5-hydroxyl of shikimate-3-phosphate (S3P) to produce enolpyruvyl shikimate-3-phosphate and inorganic phosphate. This chain is 3-phosphoshikimate 1-carboxyvinyltransferase, found in Nitrosomonas europaea (strain ATCC 19718 / CIP 103999 / KCTC 2705 / NBRC 14298).